Consider the following 304-residue polypeptide: Glutamyl-Q tRNA(Asp) synthetase (304 aa).

L-glutamate is bound by residues 14-18 (RFAPS) and Glu50. A 'HIGH' region motif is present at residues 17–27 (PSPSGPLHFGS). Zn(2+) contacts are provided by Cys106, Cys108, Tyr120, and Cys124. 2 residues coordinate L-glutamate: Tyr178 and Arg196. A 'KMSKS' region motif is present at residues 234–238 (KLSKQ). Lys237 lines the ATP pocket.

It belongs to the class-I aminoacyl-tRNA synthetase family. GluQ subfamily. Zn(2+) serves as cofactor.

Functionally, catalyzes the tRNA-independent activation of glutamate in presence of ATP and the subsequent transfer of glutamate onto a tRNA(Asp). Glutamate is transferred on the 2-amino-5-(4,5-dihydroxy-2-cyclopenten-1-yl) moiety of the queuosine in the wobble position of the QUC anticodon. This chain is Glutamyl-Q tRNA(Asp) synthetase, found in Vibrio cholerae serotype O1 (strain ATCC 39315 / El Tor Inaba N16961).